Reading from the N-terminus, the 295-residue chain is Acetylglutamate kinase (295 aa).

Residues Gly-67–Gly-68, Arg-89, and Asn-191 contribute to the substrate site.

It belongs to the acetylglutamate kinase family. ArgB subfamily.

The protein localises to the cytoplasm. The enzyme catalyses N-acetyl-L-glutamate + ATP = N-acetyl-L-glutamyl 5-phosphate + ADP. It participates in amino-acid biosynthesis; L-arginine biosynthesis; N(2)-acetyl-L-ornithine from L-glutamate: step 2/4. In terms of biological role, catalyzes the ATP-dependent phosphorylation of N-acetyl-L-glutamate. This Nitrosomonas eutropha (strain DSM 101675 / C91 / Nm57) protein is Acetylglutamate kinase.